Reading from the N-terminus, the 207-residue chain is Superoxide dismutase [Mn] (207 aa).

4 residues coordinate Mn(2+): H28, H76, D160, and H164.

This sequence belongs to the iron/manganese superoxide dismutase family. The cofactor is Mn(2+).

It catalyses the reaction 2 superoxide + 2 H(+) = H2O2 + O2. Destroys superoxide anion radicals which are normally produced within the cells and which are toxic to biological systems. The sequence is that of Superoxide dismutase [Mn] (sodA) from Mycolicibacterium fortuitum (Mycobacterium fortuitum).